An 813-amino-acid chain; its full sequence is Leucine--tRNA ligase (813 aa).

Positions 41-51 (PYPSGTLHMGH) match the 'HIGH' region motif. The 'KMSKS' region signature appears at 575–579 (KMSKS). Lys578 contacts ATP.

It belongs to the class-I aminoacyl-tRNA synthetase family.

It is found in the cytoplasm. The catalysed reaction is tRNA(Leu) + L-leucine + ATP = L-leucyl-tRNA(Leu) + AMP + diphosphate. The sequence is that of Leucine--tRNA ligase from Francisella tularensis subsp. tularensis (strain FSC 198).